The chain runs to 254 residues: Proteasome activator complex subunit 3 (254 aa).

Ala-2 carries the N-acetylalanine modification. Ser-17 and Ser-24 each carry phosphoserine. The residue at position 195 (Lys-195) is an N6-acetyllysine; by P300/CBP. Ser-247 carries the post-translational modification Phosphoserine; by CHEK2.

Belongs to the PA28 family. In terms of assembly, homoheptamer; the stability of the heptamer is essential for the specific activation of the trypsine-like subunit and inhibition of the chymotrypsin-like and postglutamyl-preferring (PGPH) subunits of the proteasome. Interacts with p53/TP53, MDM2 and MAP3K3. Associates with the proteasome. Interacts with CCAR2. Interacts with PSME3IP1 (via C-terminus); the interaction is direct and promotes the association of PSME3 with the 20S proteasome. Interacts with COIL; the interaction is inhibited by PSME3IP1. Phosphorylated by MAP3K3. Phosphorylation at Ser-247 promotes its association with CCAR2. Post-translationally, acetylation at the major site Lys-195 is important for oligomerization and ability to degrade its target substrates. Deacetylated by SIRT1.

The protein resides in the nucleus. It localises to the cytoplasm. Functionally, subunit of the 11S REG-gamma (also called PA28-gamma) proteasome regulator, a doughnut-shaped homoheptamer which associates with the proteasome. 11S REG-gamma activates the trypsin-like catalytic subunit of the proteasome but inhibits the chymotrypsin-like and postglutamyl-preferring (PGPH) subunits. Facilitates the MDM2-p53/TP53 interaction which promotes ubiquitination- and MDM2-dependent proteasomal degradation of p53/TP53, limiting its accumulation and resulting in inhibited apoptosis after DNA damage. May also be involved in cell cycle regulation. Mediates CCAR2 and CHEK2-dependent SIRT1 inhibition. This Pongo abelii (Sumatran orangutan) protein is Proteasome activator complex subunit 3 (PSME3).